An 80-amino-acid chain; its full sequence is Cytochrome c oxidase subunit 7B, mitochondrial (80 aa).

The transit peptide at methionine 1–glutamine 24 directs the protein to the mitochondrion. Residues serine 25–aspartate 32 are Mitochondrial matrix-facing. A helical membrane pass occupies residues phenylalanine 33–glutamine 59. Over valine 60–glutamine 80 the chain is Mitochondrial intermembrane.

It belongs to the cytochrome c oxidase VIIb family. In terms of assembly, component of the cytochrome c oxidase (complex IV, CIV), a multisubunit enzyme composed of 14 subunits. The complex is composed of a catalytic core of 3 subunits MT-CO1, MT-CO2 and MT-CO3, encoded in the mitochondrial DNA, and 11 supernumerary subunits COX4I, COX5A, COX5B, COX6A, COX6B, COX6C, COX7A, COX7B, COX7C, COX8 and NDUFA4, which are encoded in the nuclear genome. The complex exists as a monomer or a dimer and forms supercomplexes (SCs) in the inner mitochondrial membrane with NADH-ubiquinone oxidoreductase (complex I, CI) and ubiquinol-cytochrome c oxidoreductase (cytochrome b-c1 complex, complex III, CIII), resulting in different assemblies (supercomplex SCI(1)III(2)IV(1) and megacomplex MCI(2)III(2)IV(2)).

The protein resides in the mitochondrion inner membrane. Its pathway is energy metabolism; oxidative phosphorylation. Component of the cytochrome c oxidase, the last enzyme in the mitochondrial electron transport chain which drives oxidative phosphorylation. The respiratory chain contains 3 multisubunit complexes succinate dehydrogenase (complex II, CII), ubiquinol-cytochrome c oxidoreductase (cytochrome b-c1 complex, complex III, CIII) and cytochrome c oxidase (complex IV, CIV), that cooperate to transfer electrons derived from NADH and succinate to molecular oxygen, creating an electrochemical gradient over the inner membrane that drives transmembrane transport and the ATP synthase. Cytochrome c oxidase is the component of the respiratory chain that catalyzes the reduction of oxygen to water. Electrons originating from reduced cytochrome c in the intermembrane space (IMS) are transferred via the dinuclear copper A center (CU(A)) of subunit 2 and heme A of subunit 1 to the active site in subunit 1, a binuclear center (BNC) formed by heme A3 and copper B (CU(B)). The BNC reduces molecular oxygen to 2 water molecules using 4 electrons from cytochrome c in the IMS and 4 protons from the mitochondrial matrix. Plays a role in proper central nervous system (CNS) development in vertebrates. The sequence is that of Cytochrome c oxidase subunit 7B, mitochondrial (COX7B) from Pongo abelii (Sumatran orangutan).